A 1321-amino-acid chain; its full sequence is Probable serine/threonine-protein kinase fnkE (1321 aa).

FNIP repeat units lie at residues 108–149 (YNQL…NLSS), 150–191 (YNQP…DLSS), 192–233 (YNKL…DLSS), and 255–296 (YNKL…DISS). A Protein kinase 1 domain is found at 295–595 (SSYNQLLTPG…YNYVIKDSIM (301 aa)). Residues 301–309 (LTPGTLSNN) and K325 contribute to the ATP site. Catalysis depends on D465, which acts as the Proton acceptor. FNIP repeat units follow at residues 654–696 (FNHP…FNKF) and 741–783 (FNQP…LGSN). The Protein kinase 2 domain occupies 860-1128 (WEIISTLGSG…EGDSVFEKYL (269 aa)). Residues 866-874 (LGSGNFGKV) and K895 contribute to the ATP site. D990 functions as the Proton acceptor in the catalytic mechanism. 2 FNIP repeats span residues 1160–1202 (YNQM…LGNE) and 1224–1268 (FNFT…LGSN).

This sequence belongs to the protein kinase superfamily. STE Ser/Thr protein kinase family. It depends on Mg(2+) as a cofactor.

The enzyme catalyses L-seryl-[protein] + ATP = O-phospho-L-seryl-[protein] + ADP + H(+). It carries out the reaction L-threonyl-[protein] + ATP = O-phospho-L-threonyl-[protein] + ADP + H(+). This Dictyostelium discoideum (Social amoeba) protein is Probable serine/threonine-protein kinase fnkE.